The following is a 90-amino-acid chain: uncharacterized protein (90 aa).

Transmembrane regions (helical) follow at residues 23-43 and 48-68; these read ITTI…VGLF and VTLL…IIGF.

The protein localises to the cell membrane. This is an uncharacterized protein from Rickettsia prowazekii (strain Madrid E).